Here is a 430-residue protein sequence, read N- to C-terminus: Xaa-Pro aminopeptidase (430 aa).

Mn(2+) is bound by residues Asp-254, Asp-265, His-348, Glu-377, and Glu-400.

Belongs to the peptidase M24B family. In terms of assembly, homotetramer. Requires Mn(2+) as cofactor.

The catalysed reaction is Release of any N-terminal amino acid, including proline, that is linked to proline, even from a dipeptide or tripeptide.. The polypeptide is Xaa-Pro aminopeptidase (pepP) (Haemophilus influenzae (strain ATCC 51907 / DSM 11121 / KW20 / Rd)).